Reading from the N-terminus, the 253-residue chain is Adenosylcobinamide-GDP ribazoletransferase (253 aa).

4 helical membrane passes run 33–53, 106–126, 132–152, and 178–198; these read ISPI…YLIL, VGSG…VALL, LYTI…SLYI, and ILLL…FIIF.

Belongs to the CobS family. It depends on Mg(2+) as a cofactor.

Its subcellular location is the cell membrane. The catalysed reaction is alpha-ribazole + adenosylcob(III)inamide-GDP = adenosylcob(III)alamin + GMP + H(+). It carries out the reaction alpha-ribazole 5'-phosphate + adenosylcob(III)inamide-GDP = adenosylcob(III)alamin 5'-phosphate + GMP + H(+). The protein operates within cofactor biosynthesis; adenosylcobalamin biosynthesis; adenosylcobalamin from cob(II)yrinate a,c-diamide: step 7/7. In terms of biological role, joins adenosylcobinamide-GDP and alpha-ribazole to generate adenosylcobalamin (Ado-cobalamin). Also synthesizes adenosylcobalamin 5'-phosphate from adenosylcobinamide-GDP and alpha-ribazole 5'-phosphate. The sequence is that of Adenosylcobinamide-GDP ribazoletransferase from Saccharolobus solfataricus (strain ATCC 35092 / DSM 1617 / JCM 11322 / P2) (Sulfolobus solfataricus).